A 371-amino-acid chain; its full sequence is tRNA-specific 2-thiouridylase MnmA (371 aa).

Residues 7-14 and Met-33 each bind ATP; that span reads GLSGGVDS. An interaction with target base in tRNA region spans residues 103-105; it reads NPD. Cys-108 (nucleophile) is an active-site residue. Cys-108 and Cys-201 form a disulfide bridge. Gly-133 serves as a coordination point for ATP. The interaction with tRNA stretch occupies residues 151 to 153; it reads KDQ. Cys-201 functions as the Cysteine persulfide intermediate in the catalytic mechanism. An interaction with tRNA region spans residues 308–309; it reads RY.

Belongs to the MnmA/TRMU family.

It localises to the cytoplasm. It carries out the reaction S-sulfanyl-L-cysteinyl-[protein] + uridine(34) in tRNA + AH2 + ATP = 2-thiouridine(34) in tRNA + L-cysteinyl-[protein] + A + AMP + diphosphate + H(+). In terms of biological role, catalyzes the 2-thiolation of uridine at the wobble position (U34) of tRNA, leading to the formation of s(2)U34. This Mycoplasmopsis pulmonis (strain UAB CTIP) (Mycoplasma pulmonis) protein is tRNA-specific 2-thiouridylase MnmA.